Here is a 424-residue protein sequence, read N- to C-terminus: UDP-N-acetylglucosamine 1-carboxyvinyltransferase (424 aa).

22 to 23 (KN) provides a ligand contact to phosphoenolpyruvate. Position 93 (arginine 93) interacts with UDP-N-acetyl-alpha-D-glucosamine. The Proton donor role is filled by cysteine 117. Residue cysteine 117 is modified to 2-(S-cysteinyl)pyruvic acid O-phosphothioketal. Residues 162–165 (KVSV), aspartate 307, and isoleucine 329 each bind UDP-N-acetyl-alpha-D-glucosamine.

Belongs to the EPSP synthase family. MurA subfamily.

Its subcellular location is the cytoplasm. The enzyme catalyses phosphoenolpyruvate + UDP-N-acetyl-alpha-D-glucosamine = UDP-N-acetyl-3-O-(1-carboxyvinyl)-alpha-D-glucosamine + phosphate. It participates in cell wall biogenesis; peptidoglycan biosynthesis. In terms of biological role, cell wall formation. Adds enolpyruvyl to UDP-N-acetylglucosamine. This is UDP-N-acetylglucosamine 1-carboxyvinyltransferase from Actinobacillus pleuropneumoniae serotype 7 (strain AP76).